We begin with the raw amino-acid sequence, 1863 residues long: Calcineurin-binding protein 1 (1863 aa).

3 TPR repeats span residues 30–65, 81–116, and 118–150; these read LSQT…ITNS, FLAL…DAKD, and VLWN…SPNN. Residues 315 to 361 form a disordered region; sequence ERESGGSVKEKEPVFSEEHPQERRSTRLERLRNQKPEKEGLEFDNSK. 12 TPR repeats span residues 543-576, 602-637, 866-900, 955-988, 990-1009, 1011-1031, 1143-1183, 1226-1263, 1264-1297, 1306-1339, 1377-1412, and 1508-1541; these read ARYF…LGRE, IHEI…LAPL, INSP…EKNE, QCFF…DYQT, EQCV…SSRT, LVKL…PPDD, FESW…SQRV, VPFY…RQDW, SHAF…NPSA, ASRL…KDTA, EGVW…LAQG, and NSLR…SMSR. The span at 894 to 923 shows a compositional bias: basic and acidic residues; that stretch reads VHVEKNENNKTESKKDGSEEQVGYREKEQS. The interval 894-941 is disordered; that stretch reads VHVEKNENNKTESKKDGSEEQVGYREKEQSEQQSKQIPEHTEEVAEEE. The tract at residues 1813-1840 is disordered; the sequence is KMKRGASTSSVVPSVQSGGTSEPEPAPK. The segment covering 1818 to 1832 has biased composition (polar residues); sequence ASTSSVVPSVQSGGT.

Component of the HIRA complex made of UBN1, UBN2, ASF1A, CABIN1 and HIRA. In terms of tissue distribution, expressed at low levels in seedlings.

Its subcellular location is the nucleus. May be required for replication-independent chromatin assembly. This is Calcineurin-binding protein 1 from Arabidopsis thaliana (Mouse-ear cress).